The sequence spans 396 residues: Ribosomal RNA large subunit methyltransferase I (396 aa).

A PUA domain is found at 2 to 81 (SVRLVLAKGR…ESIDIAFFSR (80 aa)).

The protein belongs to the methyltransferase superfamily. RlmI family.

Its subcellular location is the cytoplasm. The enzyme catalyses cytidine(1962) in 23S rRNA + S-adenosyl-L-methionine = 5-methylcytidine(1962) in 23S rRNA + S-adenosyl-L-homocysteine + H(+). Functionally, specifically methylates the cytosine at position 1962 (m5C1962) of 23S rRNA. The sequence is that of Ribosomal RNA large subunit methyltransferase I from Shigella boydii serotype 18 (strain CDC 3083-94 / BS512).